Consider the following 695-residue polypeptide: Putative pentatricopeptide repeat-containing protein At1g77010, mitochondrial (695 aa).

A mitochondrion-targeting transit peptide spans 1–64 (MILKYNSSYR…KGFLSSIVIV (64 aa)). PPR repeat units follow at residues 61–91 (IVIV…MPDR), 92–122 (NYFS…MPER), 123–157 (DGYS…DVVT), 159–184 (NSLL…LNFS), 186–220 (DAIT…GVEC), 221–251 (DSKM…IREP), 252–282 (DDHS…KSNR), 283–313 (CVIL…MRNE), 317–351 (DSRT…GLID), 352–382 (DIVV…VESY), 383–417 (DTIL…SLIS), 418–448 (WNSM…DLPT), 449–483 (DEVS…GLDS), 484–514 (DQVV…MVKS), 515–549 (DEVP…GIRP), 550–585 (TQIT…GFVP), and 586–616 (DKEH…MPFD). Residues 621 to 695 (MWSSILRGCV…KNPGSSWTDC (75 aa)) are type E motif; degenerate.

This sequence belongs to the PPR family. PCMP-E subfamily.

The protein resides in the mitochondrion. The sequence is that of Putative pentatricopeptide repeat-containing protein At1g77010, mitochondrial (PCMP-E5) from Arabidopsis thaliana (Mouse-ear cress).